The following is a 147-amino-acid chain: Nucleoside diphosphate kinase (147 aa).

ATP contacts are provided by lysine 9, phenylalanine 57, arginine 85, threonine 91, arginine 102, and asparagine 112. The active-site Pros-phosphohistidine intermediate is the histidine 115.

Belongs to the NDK family. Homotetramer. Mg(2+) serves as cofactor.

The protein localises to the cytoplasm. The enzyme catalyses a 2'-deoxyribonucleoside 5'-diphosphate + ATP = a 2'-deoxyribonucleoside 5'-triphosphate + ADP. It catalyses the reaction a ribonucleoside 5'-diphosphate + ATP = a ribonucleoside 5'-triphosphate + ADP. In terms of biological role, major role in the synthesis of nucleoside triphosphates other than ATP. The ATP gamma phosphate is transferred to the NDP beta phosphate via a ping-pong mechanism, using a phosphorylated active-site intermediate. The protein is Nucleoside diphosphate kinase of Thermosipho africanus (strain TCF52B).